We begin with the raw amino-acid sequence, 217 residues long: Probable transaldolase (217 aa).

Lys83 serves as the catalytic Schiff-base intermediate with substrate.

Belongs to the transaldolase family. Type 3B subfamily.

The protein localises to the cytoplasm. The enzyme catalyses D-sedoheptulose 7-phosphate + D-glyceraldehyde 3-phosphate = D-erythrose 4-phosphate + beta-D-fructose 6-phosphate. The protein operates within carbohydrate degradation; pentose phosphate pathway; D-glyceraldehyde 3-phosphate and beta-D-fructose 6-phosphate from D-ribose 5-phosphate and D-xylulose 5-phosphate (non-oxidative stage): step 2/3. Its function is as follows. Transaldolase is important for the balance of metabolites in the pentose-phosphate pathway. This is Probable transaldolase from Bartonella bacilliformis (strain ATCC 35685 / KC583 / Herrer 020/F12,63).